A 188-amino-acid chain; its full sequence is PRA1 family protein F4 (188 aa).

The span at 1 to 13 (MANNDEITTSSHA) shows a compositional bias: polar residues. Residues 1–25 (MANNDEITTSSHASPAVNHESISRA) are disordered. The next 4 helical transmembrane spans lie at 67-86 (YFRSNYAIVILNVIFFSLIW), 90-107 (SLIVFTGLVFLWIFLYFL), 119-139 (IDDRAVLIGLSVITIVLLLLT), and 142-162 (TFNIVAALMAGAVLVLIHAVI).

The protein belongs to the PRA1 family.

The protein localises to the endosome membrane. In terms of biological role, may be involved in both secretory and endocytic intracellular trafficking in the endosomal/prevacuolar compartments. In Arabidopsis thaliana (Mouse-ear cress), this protein is PRA1 family protein F4 (PRA1F4).